The chain runs to 494 residues: Alpha-amylase B (494 aa).

Positions 1–18 (MFLAKSIVCLALLAVANA) are cleaved as a signal peptide. Gln-19 is subject to Pyrrolidone carboxylic acid. A disulfide bridge connects residues Cys-46 and Cys-102. Ca(2+)-binding residues include Asn-116, Arg-165, and Asp-174. Cys-153 and Cys-167 are joined by a disulfide. Arg-202 serves as a coordination point for chloride. The active-site Nucleophile is the Asp-204. His-208 provides a ligand contact to Ca(2+). Glu-241 acts as the Proton donor in catalysis. Asn-304 and Arg-343 together coordinate chloride. Cystine bridges form between Cys-376-Cys-382 and Cys-448-Cys-460.

This sequence belongs to the glycosyl hydrolase 13 family. Monomer. Ca(2+) serves as cofactor. Requires chloride as cofactor.

It catalyses the reaction Endohydrolysis of (1-&gt;4)-alpha-D-glucosidic linkages in polysaccharides containing three or more (1-&gt;4)-alpha-linked D-glucose units.. In Drosophila melanogaster (Fruit fly), this protein is Alpha-amylase B (Amy-d).